Here is a 446-residue protein sequence, read N- to C-terminus: Maltoporin (446 aa).

Positions 1–25 (MMITLRKLPLAVAVAAGVMSAQAMA) are cleaved as a signal peptide.

This sequence belongs to the porin LamB (TC 1.B.3) family. Homotrimer formed of three 18-stranded antiparallel beta-barrels, containing three independent channels.

The protein resides in the cell outer membrane. It carries out the reaction beta-maltose(in) = beta-maltose(out). Its function is as follows. Involved in the transport of maltose and maltodextrins. The chain is Maltoporin from Escherichia coli O127:H6 (strain E2348/69 / EPEC).